Reading from the N-terminus, the 567-residue chain is Potassium-transporting ATPase potassium-binding subunit (567 aa).

11 consecutive transmembrane segments (helical) span residues 5–25 (GWIQ…PLGG), 64–84 (TTYA…LYML), 136–156 (GLTV…IALI), 179–199 (LYVL…LGVP), 254–274 (ISNM…TNVF), 285–305 (WAIF…CYWA), 332–352 (IAMS…AVIA), 359–376 (ALGG…EIII), 421–441 (MLAV…ASVI), 486–506 (ITIG…AMAI), and 529–549 (LFVG…FFPA).

The protein belongs to the KdpA family. The system is composed of three essential subunits: KdpA, KdpB and KdpC.

Its subcellular location is the cell inner membrane. In terms of biological role, part of the high-affinity ATP-driven potassium transport (or Kdp) system, which catalyzes the hydrolysis of ATP coupled with the electrogenic transport of potassium into the cytoplasm. This subunit binds the periplasmic potassium ions and delivers the ions to the membrane domain of KdpB through an intramembrane tunnel. The chain is Potassium-transporting ATPase potassium-binding subunit from Brucella anthropi (strain ATCC 49188 / DSM 6882 / CCUG 24695 / JCM 21032 / LMG 3331 / NBRC 15819 / NCTC 12168 / Alc 37) (Ochrobactrum anthropi).